The primary structure comprises 179 residues: Large ribosomal subunit protein uL5 (179 aa).

It belongs to the universal ribosomal protein uL5 family. Part of the 50S ribosomal subunit; part of the 5S rRNA/L5/L18/L25 subcomplex. Contacts the 5S rRNA and the P site tRNA. Forms a bridge to the 30S subunit in the 70S ribosome.

Its function is as follows. This is one of the proteins that bind and probably mediate the attachment of the 5S RNA into the large ribosomal subunit, where it forms part of the central protuberance. In the 70S ribosome it contacts protein S13 of the 30S subunit (bridge B1b), connecting the 2 subunits; this bridge is implicated in subunit movement. Contacts the P site tRNA; the 5S rRNA and some of its associated proteins might help stabilize positioning of ribosome-bound tRNAs. In Proteus mirabilis (strain HI4320), this protein is Large ribosomal subunit protein uL5.